A 101-amino-acid chain; its full sequence is Large ribosomal subunit protein uL23 (101 aa).

Belongs to the universal ribosomal protein uL23 family. As to quaternary structure, part of the 50S ribosomal subunit. Contacts protein L29, and trigger factor when it is bound to the ribosome.

Its function is as follows. One of the early assembly proteins it binds 23S rRNA. One of the proteins that surrounds the polypeptide exit tunnel on the outside of the ribosome. Forms the main docking site for trigger factor binding to the ribosome. This is Large ribosomal subunit protein uL23 from Corynebacterium kroppenstedtii (strain DSM 44385 / JCM 11950 / CIP 105744 / CCUG 35717).